Reading from the N-terminus, the 603-residue chain is NADPH-dependent diflavin oxidoreductase 1 (603 aa).

The 146-residue stretch at 10–155 (VTILYGSETG…YYSEWETNLL (146 aa)) folds into the Flavodoxin-like domain. FMN contacts are provided by residues 16–21 (SETGNA), 64–67 (STTG), 102–111 (IGDSSYPKFN), and glutamate 137. Residues 209-451 (TNLLLGSVKA…HKSNLKFELP (243 aa)) enclose the FAD-binding FR-type domain. Residues arginine 359, 390–393 (RLFS), and 422–425 (GLCT) contribute to the FAD site. NADP(+) is bound by residues threonine 465 and 521–522 (SR). An FAD-binding site is contributed by tryptophan 603.

The protein belongs to the NADPH-dependent diflavin oxidoreductase NDOR1 family. In the N-terminal section; belongs to the flavodoxin family. It in the C-terminal section; belongs to the flavoprotein pyridine nucleotide cytochrome reductase family. Interacts with DRE2; as part of the cytosolic iron-sulfur (Fe-S) protein assembly (CIA) machinery. FAD serves as cofactor. FMN is required as a cofactor.

The protein localises to the cytoplasm. It is found in the mitochondrion. It carries out the reaction 2 oxidized [2Fe-2S]-[protein] + NADPH = 2 reduced [2Fe-2S]-[protein] + NADP(+) + H(+). In terms of biological role, NADPH-dependent reductase which is a central component of the cytosolic iron-sulfur (Fe-S) protein assembly (CIA) machinery. Transfers electrons from NADPH via its FAD and FMN prosthetic groups to the [2Fe-2S] cluster of DRE2, another key component of the CIA machinery. In turn, this reduced cluster provides electrons for assembly of cytosolic iron-sulfur cluster proteins. Positively controls H(2)O(2)-induced cell death. This is NADPH-dependent diflavin oxidoreductase 1 from Debaryomyces hansenii (strain ATCC 36239 / CBS 767 / BCRC 21394 / JCM 1990 / NBRC 0083 / IGC 2968) (Yeast).